Here is a 234-residue protein sequence, read N- to C-terminus: Octanoyltransferase (234 aa).

Positions Asp-35 to Leu-221 constitute a BPL/LPL catalytic domain. Substrate-binding positions include Arg-74–His-81, Ala-150–Gly-152, and Gly-163–Ser-165. The active-site Acyl-thioester intermediate is Cys-181.

It belongs to the LipB family.

The protein localises to the cytoplasm. The catalysed reaction is octanoyl-[ACP] + L-lysyl-[protein] = N(6)-octanoyl-L-lysyl-[protein] + holo-[ACP] + H(+). It functions in the pathway protein modification; protein lipoylation via endogenous pathway; protein N(6)-(lipoyl)lysine from octanoyl-[acyl-carrier-protein]: step 1/2. In terms of biological role, catalyzes the transfer of endogenously produced octanoic acid from octanoyl-acyl-carrier-protein onto the lipoyl domains of lipoate-dependent enzymes. Lipoyl-ACP can also act as a substrate although octanoyl-ACP is likely to be the physiological substrate. In Hyphomonas neptunium (strain ATCC 15444), this protein is Octanoyltransferase.